We begin with the raw amino-acid sequence, 426 residues long: Cell cycle checkpoint control protein RAD9B (426 aa).

Ser359 is modified (phosphoserine).

The protein belongs to the rad9 family. In terms of assembly, interacts with HUS1, HUS1B, RAD1, RAD9A and RAD17. As to expression, expressed in testis and skeletal muscle.

The protein is Cell cycle checkpoint control protein RAD9B (RAD9B) of Homo sapiens (Human).